The sequence spans 545 residues: Glucose-6-phosphate isomerase (545 aa).

Glu351 (proton donor) is an active-site residue. Active-site residues include His382 and Lys510.

This sequence belongs to the GPI family.

The protein resides in the cytoplasm. The catalysed reaction is alpha-D-glucose 6-phosphate = beta-D-fructose 6-phosphate. The protein operates within carbohydrate biosynthesis; gluconeogenesis. It functions in the pathway carbohydrate degradation; glycolysis; D-glyceraldehyde 3-phosphate and glycerone phosphate from D-glucose: step 2/4. Catalyzes the reversible isomerization of glucose-6-phosphate to fructose-6-phosphate. This is Glucose-6-phosphate isomerase from Shewanella oneidensis (strain ATCC 700550 / JCM 31522 / CIP 106686 / LMG 19005 / NCIMB 14063 / MR-1).